A 680-amino-acid chain; its full sequence is Structure-specific endonuclease subunit SLX4 (680 aa).

Disordered stretches follow at residues 15–92 (EVAK…EPVV), 141–183 (ESSS…STQQ), and 450–490 (LGSG…ATRL). Residues 22-33 (DSDEPIIDEDDL) are compositionally biased toward acidic residues. Residues 60 to 86 (NNSKDTFKETPLELVDKEEAIEDKAPN) show a composition bias toward basic and acidic residues. Basic residues predominate over residues 156 to 174 (LKSKKITKPKLTKTSKRTK). Over residues 473–490 (TVISRSPQSTRTPQATRL) the composition is skewed to polar residues.

This sequence belongs to the SLX4 family. In terms of assembly, forms a heterodimer with SLX1. In terms of processing, phosphorylated in response to DNA damage.

Its subcellular location is the nucleus. Its function is as follows. Regulatory subunit of the SLX1-SLX4 structure-specific endonuclease that resolves DNA secondary structures generated during DNA repair and recombination. Has endonuclease activity towards branched DNA substrates, introducing single-strand cuts in duplex DNA close to junctions with ss-DNA. In Vanderwaltozyma polyspora (strain ATCC 22028 / DSM 70294 / BCRC 21397 / CBS 2163 / NBRC 10782 / NRRL Y-8283 / UCD 57-17) (Kluyveromyces polysporus), this protein is Structure-specific endonuclease subunit SLX4.